Reading from the N-terminus, the 307-residue chain is Ribonuclease Z (307 aa).

Histidine 63, histidine 65, aspartate 67, histidine 68, histidine 141, aspartate 212, and histidine 270 together coordinate Zn(2+). The active-site Proton acceptor is the aspartate 67.

The protein belongs to the RNase Z family. Homodimer. Zn(2+) is required as a cofactor.

The catalysed reaction is Endonucleolytic cleavage of RNA, removing extra 3' nucleotides from tRNA precursor, generating 3' termini of tRNAs. A 3'-hydroxy group is left at the tRNA terminus and a 5'-phosphoryl group is left at the trailer molecule.. In terms of biological role, zinc phosphodiesterase, which displays some tRNA 3'-processing endonuclease activity. Probably involved in tRNA maturation, by removing a 3'-trailer from precursor tRNA. The protein is Ribonuclease Z of Bacillus cereus (strain B4264).